Consider the following 375-residue polypeptide: Phosphate acyltransferase (375 aa).

The tract at residues 354 to 375 (AQDDATSADADAPGDSETGSTN) is disordered. The segment covering 356 to 368 (DDATSADADAPGD) has biased composition (low complexity).

The protein belongs to the PlsX family. Homodimer. Probably interacts with PlsY.

Its subcellular location is the cytoplasm. It catalyses the reaction a fatty acyl-[ACP] + phosphate = an acyl phosphate + holo-[ACP]. Its pathway is lipid metabolism; phospholipid metabolism. Catalyzes the reversible formation of acyl-phosphate (acyl-PO(4)) from acyl-[acyl-carrier-protein] (acyl-ACP). This enzyme utilizes acyl-ACP as fatty acyl donor, but not acyl-CoA. The protein is Phosphate acyltransferase of Ruegeria sp. (strain TM1040) (Silicibacter sp.).